The primary structure comprises 136 residues: Histone H2B.5 (136 aa).

The span at 1–36 shows a compositional bias: basic and acidic residues; it reads MAPKAEKKPAAEKKPVETEKKPKAEKRVPGKDGGAD. A disordered region spans residues 1–44; that stretch reads MAPKAEKKPAAEKKPVETEKKPKAEKRVPGKDGGADKKKKKAKK. N6-acetyllysine is present on residues Lys-7 and Lys-26. Lys-132 is covalently cross-linked (Glycyl lysine isopeptide (Lys-Gly) (interchain with G-Cter in ubiquitin)).

This sequence belongs to the histone H2B family. The nucleosome is a histone octamer containing two molecules each of H2A, H2B, H3 and H4 assembled in one H3-H4 heterotetramer and two H2A-H2B heterodimers. The octamer wraps approximately 147 bp of DNA. In terms of processing, can be acetylated to form H2BK6ac and H2BK33ac. Post-translationally, monoubiquitinated to form H2BK143ub1; may give a specific tag for epigenetic transcriptional activation.

It is found in the nucleus. It localises to the chromosome. Its function is as follows. Core component of nucleosome. Nucleosomes wrap and compact DNA into chromatin, limiting DNA accessibility to the cellular machineries which require DNA as a template. Histones thereby play a central role in transcription regulation, DNA repair, DNA replication and chromosomal stability. DNA accessibility is regulated via a complex set of post-translational modifications of histones, also called histone code, and nucleosome remodeling. In Triticum aestivum (Wheat), this protein is Histone H2B.5.